A 557-amino-acid chain; its full sequence is Coiled-coil domain-containing protein 22 homolog (557 aa).

Coiled-coil stretches lie at residues 260-350 (RLGQ…LQSQ) and 489-554 (ELTA…AGRN).

Belongs to the CCDC22 family.

This Anopheles gambiae (African malaria mosquito) protein is Coiled-coil domain-containing protein 22 homolog.